Reading from the N-terminus, the 208-residue chain is Small ribosomal subunit protein eS8 (208 aa).

Positions 1–33 are disordered; that stretch reads MGISRDHWHKRRATGGKRKPIRKKRKFELGRPA. Residues 7-26 show a composition bias toward basic residues; the sequence is HWHKRRATGGKRKPIRKKRK.

Belongs to the eukaryotic ribosomal protein eS8 family.

The polypeptide is Small ribosomal subunit protein eS8 (RpS8) (Apis mellifera (Honeybee)).